Reading from the N-terminus, the 139-residue chain is Ribulose bisphosphate carboxylase small subunit (139 aa).

This sequence belongs to the RuBisCO small chain family. Heterohexadecamer of 8 large and 8 small subunits.

It is found in the plastid. The protein resides in the chloroplast. Functionally, ruBisCO catalyzes two reactions: the carboxylation of D-ribulose 1,5-bisphosphate, the primary event in carbon dioxide fixation, as well as the oxidative fragmentation of the pentose substrate in the photorespiration process. Both reactions occur simultaneously and in competition at the same active site. Although the small subunit is not catalytic it is essential for maximal activity. The protein is Ribulose bisphosphate carboxylase small subunit of Chrysotila carterae (Marine alga).